A 51-amino-acid chain; its full sequence is Lantibiotic streptococcin A-M49 (51 aa).

A propeptide spanning residues 1-25 (MTKEHEIINSIQEVSLEELDQIIGA) is cleaved from the precursor. 2 consecutive cross-links (beta-methyllanthionine (Thr-Cys)) follow at residues 33-38 (TISHEC) and 42-50 (TWAFLATCC). The lanthionine (Ser-Cys) cross-link spans 35–49 (SHECHLNTWAFLATC). A 2,3-didehydrobutyrine modification is found at Thr-48.

Belongs to the type A lantibiotic family. Maturation of lantibiotics involves the enzymatic conversion of Thr, and Ser into dehydrated AA and the formation of thioether bonds with cysteine. This is followed by membrane translocation and cleavage of the modified precursor.

The protein resides in the secreted. Its subcellular location is the cell surface. Functionally, lanthionine-containing peptide antibiotic (lantibiotic) active on certain Gram-positive bacteria. The bactericidal activity of lantibiotics is based on depolarization of energized bacterial cytoplasmic membranes, initiated by the formation of aqueous transmembrane pores. The polypeptide is Lantibiotic streptococcin A-M49 (scnA') (Streptococcus pyogenes serotype M49).